A 413-amino-acid chain; its full sequence is Phosphatidylcholine:ceramide cholinephosphotransferase 1 (413 aa).

The region spanning 7 to 70 is the SAM domain; it reads WSPKKVADWL…LDMIETLKME (64 aa). Residue serine 8 is modified to Phosphoserine. The next 5 membrane-spanning stretches (helical) occupy residues 136 to 156, 184 to 204, 215 to 235, 276 to 296, and 304 to 324; these read FLAF…ISVV, FSIC…QWLL, FFCI…VTTL, MCGD…YLFI, and LWWY…CILL. Residue histidine 285 is part of the active site. At 325 to 413 the chain is on the cytoplasmic side; it reads AHDHYTVDVV…VKYSRLVNDT (89 aa). Residues histidine 328 and aspartate 332 contribute to the active site.

It belongs to the sphingomyelin synthase family. Brain, heart, kidney, liver, muscle and stomach.

The protein localises to the golgi apparatus membrane. The enzyme catalyses an N-acylsphing-4-enine + a 1,2-diacyl-sn-glycero-3-phosphocholine = a sphingomyelin + a 1,2-diacyl-sn-glycerol. The catalysed reaction is an N-acylsphinganine + a 1,2-diacyl-sn-glycero-3-phosphocholine = an N-acylsphinganine-1-phosphocholine + a 1,2-diacyl-sn-glycerol. It catalyses the reaction an N-acyl-(4R)-4-hydroxysphinganine + a 1,2-diacyl-sn-glycero-3-phosphocholine = an N-acyl-(4R)-4-hydroxysphinganine-phosphocholine + a 1,2-diacyl-sn-glycerol. It carries out the reaction 1-(9Z-octadecenoyl)-2-acyl-sn-3-glycerol + a sphingomyelin = a 1-(9Z-octadecenoyl)-2-acyl-sn-glycero-3-phosphocholine + an N-acylsphing-4-enine. The enzyme catalyses N-hexadecanoylsphinganine + a 1,2-diacyl-sn-glycero-3-phosphocholine = N-hexadecanoyl-sphinganine-1-phosphocholine + a 1,2-diacyl-sn-glycerol. The catalysed reaction is N-hexadecanoyl-(4R)-hydroxysphinganine + a 1,2-diacyl-sn-glycero-3-phosphocholine = N-hexadecanoyl-(4R)-hydroxysphinganine-phosphocholine + a 1,2-diacyl-sn-glycerol. It catalyses the reaction an N-acylsphing-4-enine + a 1,2-diacyl-sn-glycero-3-phosphoethanolamine = an N-acylsphing-4-enine 1-phosphoethanolamine + a 1,2-diacyl-sn-glycerol. The protein operates within sphingolipid metabolism. Inhibited by bacterial PC-phospholipase C inhibitor D609. Major sphingomyelin synthase at the Golgi apparatus. Catalyzes the reversible transfer of phosphocholine moiety in sphingomyelin biosynthesis: in the forward reaction transfers phosphocholine head group of phosphatidylcholine (PC) on to ceramide (CER) to form ceramide phosphocholine (sphingomyelin, SM) and diacylglycerol (DAG) as by-product, and in the reverse reaction transfers phosphocholine from SM to DAG to form PC and CER. The direction of the reaction depends on the levels of CER and DAG in Golgi membranes. Converts the newly synthesized CER, that is transported from the endoplasmic reticulum to the trans-Golgi by the Cer transport protein (CERT), to SM. Can form a heteromeric complex with glucosylceramide synthase (GCS) increasing SMS activity and reducing glucosylceramide synthesis, a critical mechanism that controls the metabolic fate of CER in the Golgi. Does not use free phosphorylcholine or CDP-choline as donor. Can also transfer phosphoethanolamine head group of phosphatidylethanolamine (PE) on to CER to form ceramide phosphoethanolamine (CPE). Regulates receptor-mediated signal transduction via mitogenic DAG and proapoptotic CER, as well as via SM, a structural component of membrane rafts that serve as platforms for signal transduction and protein sorting. Plays a role in secretory transport via regulation of DAG pool at the Golgi apparatus and its downstream effects on PRKD1. The polypeptide is Phosphatidylcholine:ceramide cholinephosphotransferase 1 (SGMS1) (Homo sapiens (Human)).